The primary structure comprises 457 residues: Bifunctional protein GlmU (457 aa).

The interval 1 to 230 (MSKRYAVVLA…FEESLGVNDR (230 aa)) is pyrophosphorylase. UDP-N-acetyl-alpha-D-glucosamine is bound by residues 9–12 (LAAG), Lys23, Gln73, and 78–79 (GT). A Mg(2+)-binding site is contributed by Asp103. UDP-N-acetyl-alpha-D-glucosamine contacts are provided by Gly140, Glu155, Asn170, and Asn228. Mg(2+) is bound at residue Asn228. The interval 231–251 (IALAEASKLMQRRINENHMRN) is linker. The segment at 252 to 457 (GVTLVNPEST…GYAKHLNHGK (206 aa)) is N-acetyltransferase. Residues Arg333 and Lys351 each coordinate UDP-N-acetyl-alpha-D-glucosamine. The active-site Proton acceptor is the His363. The UDP-N-acetyl-alpha-D-glucosamine site is built by Tyr366 and Asn377. Residues 386–387 (NY), Ala423, and Arg440 contribute to the acetyl-CoA site.

This sequence in the N-terminal section; belongs to the N-acetylglucosamine-1-phosphate uridyltransferase family. In the C-terminal section; belongs to the transferase hexapeptide repeat family. In terms of assembly, homotrimer. Mg(2+) is required as a cofactor.

The protein resides in the cytoplasm. It catalyses the reaction alpha-D-glucosamine 1-phosphate + acetyl-CoA = N-acetyl-alpha-D-glucosamine 1-phosphate + CoA + H(+). The enzyme catalyses N-acetyl-alpha-D-glucosamine 1-phosphate + UTP + H(+) = UDP-N-acetyl-alpha-D-glucosamine + diphosphate. The protein operates within nucleotide-sugar biosynthesis; UDP-N-acetyl-alpha-D-glucosamine biosynthesis; N-acetyl-alpha-D-glucosamine 1-phosphate from alpha-D-glucosamine 6-phosphate (route II): step 2/2. It participates in nucleotide-sugar biosynthesis; UDP-N-acetyl-alpha-D-glucosamine biosynthesis; UDP-N-acetyl-alpha-D-glucosamine from N-acetyl-alpha-D-glucosamine 1-phosphate: step 1/1. Its pathway is bacterial outer membrane biogenesis; LPS lipid A biosynthesis. Catalyzes the last two sequential reactions in the de novo biosynthetic pathway for UDP-N-acetylglucosamine (UDP-GlcNAc). The C-terminal domain catalyzes the transfer of acetyl group from acetyl coenzyme A to glucosamine-1-phosphate (GlcN-1-P) to produce N-acetylglucosamine-1-phosphate (GlcNAc-1-P), which is converted into UDP-GlcNAc by the transfer of uridine 5-monophosphate (from uridine 5-triphosphate), a reaction catalyzed by the N-terminal domain. This chain is Bifunctional protein GlmU, found in Listeria monocytogenes serotype 4a (strain HCC23).